We begin with the raw amino-acid sequence, 431 residues long: uncharacterized protein (431 aa).

The 258-residue stretch at 1–258 folds into the Peptidase S8 domain; the sequence is MPSQMREAIT…HGLIDLERAG (258 aa).

It belongs to the peptidase S8 family.

This is an uncharacterized protein from Sinorhizobium fredii (strain NBRC 101917 / NGR234).